The sequence spans 230 residues: Ureidoacrylate amidohydrolase RutB (230 aa).

The active-site Proton acceptor is the D24. The active site involves K133. C166 functions as the Nucleophile in the catalytic mechanism.

The protein belongs to the isochorismatase family. RutB subfamily.

The catalysed reaction is (Z)-3-ureidoacrylate + H2O + H(+) = (Z)-3-aminoacrylate + NH4(+) + CO2. It carries out the reaction (Z)-3-ureidoacrylate + H2O = (Z)-3-aminoacrylate + carbamate + H(+). The enzyme catalyses (Z)-2-methylureidoacrylate + H2O + H(+) = (Z)-2-methylaminoacrylate + NH4(+) + CO2. In terms of biological role, hydrolyzes ureidoacrylate to form aminoacrylate and carbamate. The carbamate hydrolyzes spontaneously, thereby releasing one of the nitrogen atoms of the pyrimidine ring as ammonia and one of its carbon atoms as CO2. The polypeptide is Ureidoacrylate amidohydrolase RutB (Escherichia coli O81 (strain ED1a)).